Consider the following 190-residue polypeptide: Pyridoxamine 5'-phosphate oxidase C1952.08c homolog (190 aa).

Serine 62 and lysine 69 together coordinate FMN.

The protein belongs to the pyridoxamine 5'-phosphate oxidase family. FMN is required as a cofactor.

The protein localises to the cytoplasm. It is found in the nucleus. In Schizosaccharomyces pombe (strain 972 / ATCC 24843) (Fission yeast), this protein is Pyridoxamine 5'-phosphate oxidase C1952.08c homolog.